Here is a 118-residue protein sequence, read N- to C-terminus: Large ribosomal subunit protein bL19 (118 aa).

Belongs to the bacterial ribosomal protein bL19 family.

In terms of biological role, this protein is located at the 30S-50S ribosomal subunit interface and may play a role in the structure and function of the aminoacyl-tRNA binding site. In Helicobacter acinonychis (strain Sheeba), this protein is Large ribosomal subunit protein bL19.